Reading from the N-terminus, the 86-residue chain is Kappa-theraphotoxin-Cg1a 5 (86 aa).

The first 21 residues, 1 to 21, serve as a signal peptide directing secretion; the sequence is MKVSVLITLAVLGVMFVWTSA. Residues 22–50 constitute a propeptide that is removed on maturation; sequence AELEERGSDQRDSPAWLKSMERIFQSEER. 3 cysteine pairs are disulfide-bonded: Cys-52-Cys-66, Cys-59-Cys-71, and Cys-65-Cys-78. The residue at position 84 (Phe-84) is a Phenylalanine amide.

This sequence belongs to the neurotoxin 10 (Hwtx-1) family. 28 (Jztx-11) subfamily. In terms of tissue distribution, expressed by the venom gland.

The protein resides in the secreted. Its function is as follows. This toxin acts as a voltage-dependent gating-modifier. It inhibits the sodium conductance (IC(50)=124 nM) and slows the fast inactivation (EC(50)=1180 nM) of Nav1.5/SCN5A. It significantly shifts the activation to more depolarized voltages and decreases the deactivation of Nav1.5 currents upon extreme depolarization, but only slightly affects voltage-dependence of steady-state inactivation. In addition, this toxin causes an approximately five-fold decrease in the rate of recovery from inactivation and an approximately 1.9-fold reduction in the closed-state inactivation rate. This toxin integrates the functions of site 3 toxins (alpha-scorpion toxins) with site 4 toxins (beta-scorpion and spider toxins) by targeting multiple sites on Nav1.5. Also shows inhibition of voltage-gated potassium channels (5 uM completely inhibits Kv2.1/KCNB1, whereas 5 uM moderately inhibits Kv4.2/KCND2 Kv4.1/KCND1 channels). The chain is Kappa-theraphotoxin-Cg1a 5 from Chilobrachys guangxiensis (Chinese earth tiger tarantula).